The following is an 83-amino-acid chain: Short neurotoxin 1 (83 aa).

The signal sequence occupies residues 1–21; that stretch reads MKTLLLTLVVVTIVCLDLGYT. 4 cysteine pairs are disulfide-bonded: Cys24-Cys45, Cys38-Cys62, Cys64-Cys75, and Cys76-Cys81.

It belongs to the three-finger toxin family. Short-chain subfamily. Type I alpha-neurotoxin sub-subfamily. In terms of tissue distribution, expressed by the venom gland.

The protein resides in the secreted. Its function is as follows. Binds to muscle nicotinic acetylcholine receptor (nAChR) and inhibit acetylcholine from binding to the receptor, thereby impairing neuromuscular transmission. This is Short neurotoxin 1 from Pseudechis australis (Mulga snake).